We begin with the raw amino-acid sequence, 170 residues long: MDFKQYIRVIPDFPQPGIRFKDITTLLKDGPAYKAAIQDLAVFAREVQADVIAGPEARGFVVGAPLSYEMGIGFVPIRKSGKLPYESIKANYDLEYGKDALAVHVDAIQPGQRVLIADDLLATGGTIETTINLIEQLGGKVVGAAFFIELSYLDGRSKIGEIPIKSLVQY.

It belongs to the purine/pyrimidine phosphoribosyltransferase family. In terms of assembly, homodimer.

Its subcellular location is the cytoplasm. The enzyme catalyses AMP + diphosphate = 5-phospho-alpha-D-ribose 1-diphosphate + adenine. Its pathway is purine metabolism; AMP biosynthesis via salvage pathway; AMP from adenine: step 1/1. Functionally, catalyzes a salvage reaction resulting in the formation of AMP, that is energically less costly than de novo synthesis. This is Adenine phosphoribosyltransferase from Brevibacillus brevis (strain 47 / JCM 6285 / NBRC 100599).